A 79-amino-acid polypeptide reads, in one-letter code: Acyl carrier protein (79 aa).

One can recognise a Carrier domain in the interval 2-77 (SDIEERVKKI…SAIDYVNAHK (76 aa)). An O-(pantetheine 4'-phosphoryl)serine modification is found at Ser-37.

It belongs to the acyl carrier protein (ACP) family. 4'-phosphopantetheine is transferred from CoA to a specific serine of apo-ACP by AcpS. This modification is essential for activity because fatty acids are bound in thioester linkage to the sulfhydryl of the prosthetic group.

The protein localises to the cytoplasm. It functions in the pathway lipid metabolism; fatty acid biosynthesis. Carrier of the growing fatty acid chain in fatty acid biosynthesis. The chain is Acyl carrier protein from Pseudoalteromonas atlantica (strain T6c / ATCC BAA-1087).